The sequence spans 193 residues: Dense granule protein 2 (193 aa).

A glycan (N-linked (GlcNAc...) asparagine) is linked at Asn-4. Residues Phe-14–Leu-34 traverse the membrane as a helical segment. Residue Asn-74 is glycosylated (N-linked (GlcNAc...) asparagine). The interval Ser-75–Ala-140 is disordered. A compositionally biased stretch (acidic residues) spans Glu-88 to Thr-98. Residues His-153 to Ser-173 form a helical membrane-spanning segment. Residues Arg-174–Lys-193 form a disordered region.

It belongs to the Gra6 family.

Its subcellular location is the membrane. The protein is Dense granule protein 2 (DG2) of Neospora caninum (Coccidian parasite).